Here is a 452-residue protein sequence, read N- to C-terminus: Nuclear distribution protein nudF 2 (452 aa).

Residues alanine 76–arginine 101 adopt a coiled-coil conformation. 7 WD repeats span residues serine 123–lysine 164, histidine 166–arginine 206, glycine 210–valine 250, serine 253–alanine 292, glycine 295–leucine 355, glycine 357–lysine 396, and alanine 401–arginine 449.

Belongs to the WD repeat LIS1/nudF family. As to quaternary structure, self-associates. Interacts with nudE and dynein.

It is found in the cytoplasm. It localises to the cytoskeleton. Its subcellular location is the spindle pole. In terms of biological role, positively regulates the activity of the minus-end directed microtubule motor protein dynein. May enhance dynein-mediated microtubule sliding by targeting dynein to the microtubule plus end. Required for nuclear migration during vegetative growth as well as development. Required for retrograde early endosome (EE) transport from the hyphal tip. Required for localization of dynein to the mitotic spindle poles. Recruits additional proteins to the dynein complex at SPBs. This is Nuclear distribution protein nudF 2 from Talaromyces marneffei (strain ATCC 18224 / CBS 334.59 / QM 7333) (Penicillium marneffei).